Here is a 353-residue protein sequence, read N- to C-terminus: Photosystem II protein D1 (353 aa).

Thr2 bears the N-acetylthreonine mark. Residue Thr2 is modified to Phosphothreonine. A run of 3 helical transmembrane segments spans residues 29–46 (YIGW…TATS), 118–133 (HFLL…EWEL), and 142–156 (WIAV…AATA). His118 serves as a coordination point for chlorophyll a. Tyr126 is a binding site for pheophytin a. The [CaMn4O5] cluster site is built by Asp170 and Glu189. The chain crosses the membrane as a helical span at residues 197 to 218 (FHMLGVAGVFGGSLFSAMHGSL). His198 is a binding site for chlorophyll a. A quinone-binding positions include His215 and 264 to 265 (SF). His215 contacts Fe cation. His272 lines the Fe cation pocket. The chain crosses the membrane as a helical span at residues 274-288 (FLAAWPVVGIWFTAL). 4 residues coordinate [CaMn4O5] cluster: His332, Glu333, Asp342, and Ala344. Positions 345–353 (AVEVPSTNG) are excised as a propeptide.

The protein belongs to the reaction center PufL/M/PsbA/D family. PSII is composed of 1 copy each of membrane proteins PsbA, PsbB, PsbC, PsbD, PsbE, PsbF, PsbH, PsbI, PsbJ, PsbK, PsbL, PsbM, PsbT, PsbX, PsbY, PsbZ, Psb30/Ycf12, at least 3 peripheral proteins of the oxygen-evolving complex and a large number of cofactors. It forms dimeric complexes. Requires The D1/D2 heterodimer binds P680, chlorophylls that are the primary electron donor of PSII, and subsequent electron acceptors. It shares a non-heme iron and each subunit binds pheophytin, quinone, additional chlorophylls, carotenoids and lipids. D1 provides most of the ligands for the Mn4-Ca-O5 cluster of the oxygen-evolving complex (OEC). There is also a Cl(-1) ion associated with D1 and D2, which is required for oxygen evolution. The PSII complex binds additional chlorophylls, carotenoids and specific lipids. as cofactor. Tyr-161 forms a radical intermediate that is referred to as redox-active TyrZ, YZ or Y-Z. In terms of processing, C-terminally processed by CTPA; processing is essential to allow assembly of the oxygen-evolving complex and thus photosynthetic growth.

It is found in the plastid. The protein localises to the chloroplast thylakoid membrane. The enzyme catalyses 2 a plastoquinone + 4 hnu + 2 H2O = 2 a plastoquinol + O2. Its function is as follows. Photosystem II (PSII) is a light-driven water:plastoquinone oxidoreductase that uses light energy to abstract electrons from H(2)O, generating O(2) and a proton gradient subsequently used for ATP formation. It consists of a core antenna complex that captures photons, and an electron transfer chain that converts photonic excitation into a charge separation. The D1/D2 (PsbA/PsbD) reaction center heterodimer binds P680, the primary electron donor of PSII as well as several subsequent electron acceptors. In Eucalyptus globulus subsp. globulus (Tasmanian blue gum), this protein is Photosystem II protein D1.